A 298-amino-acid chain; its full sequence is Homoserine kinase (298 aa).

An ATP-binding site is contributed by 83–93 (PVSRGLGSSST).

The protein belongs to the GHMP kinase family. Homoserine kinase subfamily.

The protein resides in the cytoplasm. It catalyses the reaction L-homoserine + ATP = O-phospho-L-homoserine + ADP + H(+). It functions in the pathway amino-acid biosynthesis; L-threonine biosynthesis; L-threonine from L-aspartate: step 4/5. Functionally, catalyzes the ATP-dependent phosphorylation of L-homoserine to L-homoserine phosphate. The sequence is that of Homoserine kinase from Clostridium beijerinckii (strain ATCC 51743 / NCIMB 8052) (Clostridium acetobutylicum).